The sequence spans 462 residues: DEK domain-containing chromatin-associated protein 1 (462 aa).

2 disordered regions span residues 18 to 91 and 212 to 390; these read AVTE…TQGR and KETK…RKEL. The span at 20–32 shows a compositional bias: basic and acidic residues; it reads TEKDTETKKKDEV. Positions 33–46 are enriched in acidic residues; sequence EKDEAMEEKGEEID. Residues 77 to 91 show a composition bias toward polar residues; the sequence is PRSSGNKPLSITQGR. Residues 267–276 are compositionally biased toward acidic residues; that stretch reads NGEDDVAPEE. Basic and acidic residues-rich tracts occupy residues 277 to 303, 312 to 322, and 347 to 360; these read ENNKSEDTETEDEKDKAKEKTKSTDKK, EKPAAEEEKSI, and QKVDKDDSSKEKGK. The Nuclear localization signal signature appears at 344–351; that stretch reads SKKQKVDK. Positions 384–439 constitute a DEK-C domain; that stretch reads EPTRKELHVVVTKILKEVDFNTATLSDILRKLGSHFGIDLMHRKAEVKDIITDAIN. DNA-binding regions lie at residues 402–416 and 431–435; these read DFNTATLSDILRKLG and KDIIT. The interval 438-462 is disordered; the sequence is INEMSDDDDEKEEDTEDEGEKEGKD. The span at 441–462 shows a compositional bias: acidic residues; sequence MSDDDDEKEEDTEDEGEKEGKD.

As to quaternary structure, found in a mRNA splicing-dependent exon junction complex (EJC). Binds specifically histones H3 and H4.

It localises to the nucleus. The protein localises to the nucleolus. Its function is as follows. Chromatin-associated protein which contributes to the modulation of chromatin structure (such as super-helical structure of DNA) and function. Binds to chromatin of protein-coding genes throughout the genome to regulate nucleosome occupancy and chromatin accessibility, and to modulate the expression of target genes. The polypeptide is DEK domain-containing chromatin-associated protein 1 (Arabidopsis thaliana (Mouse-ear cress)).